A 507-amino-acid polypeptide reads, in one-letter code: Protein DETOXIFICATION 39 (507 aa).

The next 12 membrane-spanning stretches (helical) occupy residues 58 to 78 (VLFR…GMGI), 92 to 112 (LAAA…MLGM), 141 to 161 (IVLA…YPIL), 178 to 198 (IAGL…QKFL), 209 to 229 (FISA…VYVM), 233 to 253 (FMGI…SQCF), 287 to 307 (AVMI…AGLL), 318 to 338 (SICM…NAAV), 359 to 379 (WTAT…VIWF), 403 to 423 (FLAI…VAVG), 433 to 453 (VNVG…GFTF), and 459 to 479 (GIWT…LYVT).

This sequence belongs to the multi antimicrobial extrusion (MATE) (TC 2.A.66.1) family.

The protein resides in the membrane. This is Protein DETOXIFICATION 39 from Arabidopsis thaliana (Mouse-ear cress).